The chain runs to 635 residues: Threonine--tRNA ligase (635 aa).

The TGS domain occupies 1–61 (MVSIRLPDGS…DHDASLAIVT (61 aa)). The catalytic stretch occupies residues 242 to 533 (DHRKLGKQLD…LIEHHAGAMP (292 aa)). 3 residues coordinate Zn(2+): C333, H384, and H510.

Belongs to the class-II aminoacyl-tRNA synthetase family. As to quaternary structure, homodimer. Requires Zn(2+) as cofactor.

It localises to the cytoplasm. The catalysed reaction is tRNA(Thr) + L-threonine + ATP = L-threonyl-tRNA(Thr) + AMP + diphosphate + H(+). In terms of biological role, catalyzes the attachment of threonine to tRNA(Thr) in a two-step reaction: L-threonine is first activated by ATP to form Thr-AMP and then transferred to the acceptor end of tRNA(Thr). Also edits incorrectly charged L-seryl-tRNA(Thr). The chain is Threonine--tRNA ligase from Burkholderia multivorans (strain ATCC 17616 / 249).